Here is a 118-residue protein sequence, read N- to C-terminus: Large ribosomal subunit protein bL20 (118 aa).

It belongs to the bacterial ribosomal protein bL20 family.

In terms of biological role, binds directly to 23S ribosomal RNA and is necessary for the in vitro assembly process of the 50S ribosomal subunit. It is not involved in the protein synthesizing functions of that subunit. The polypeptide is Large ribosomal subunit protein bL20 (Desulforamulus reducens (strain ATCC BAA-1160 / DSM 100696 / MI-1) (Desulfotomaculum reducens)).